We begin with the raw amino-acid sequence, 391 residues long: MTRSIAGELQQLREQGLYRSLRTVAGSQGSRVVAEGREVVLLCSNNYLGLADHPSLKRAAVEAVERYGTGSGASRLVSGTMELHAALEERLARFKGTEAALVFNSGYAANSGIIPALVGRGDVVFSDRLNHASIVDGCLLSRARFVRYPHNDMNALERLLAEHRGAGRMLIVTDGVFSMDGDLAPLPALVALKRQYGALLMVDDAHGTGVLGESGRGSAEQFEVAADIDLQMGTLGKALGGFGAYVAASAEVVELLINRARSFIFSTSLPPAVLAAARAALDLVDSPEGKALRRRLARSAALFRDALQEAGFDTMGSETQIVPALVGEAEPAMTFTRRLLEEGFYVQGIRPPTVPAGTCRLRCTLMATHDESDLERAVAAMARIGKELGIV.

Arg19 is a substrate binding site. 106-107 (GY) provides a ligand contact to pyridoxal 5'-phosphate. His131 is a substrate binding site. Pyridoxal 5'-phosphate is bound by residues Ser178, His206, and Thr234. Lys237 is subject to N6-(pyridoxal phosphate)lysine. Thr353 contacts substrate.

This sequence belongs to the class-II pyridoxal-phosphate-dependent aminotransferase family. BioF subfamily. In terms of assembly, homodimer. It depends on pyridoxal 5'-phosphate as a cofactor.

It catalyses the reaction 6-carboxyhexanoyl-[ACP] + L-alanine + H(+) = (8S)-8-amino-7-oxononanoate + holo-[ACP] + CO2. It functions in the pathway cofactor biosynthesis; biotin biosynthesis. In terms of biological role, catalyzes the decarboxylative condensation of pimeloyl-[acyl-carrier protein] and L-alanine to produce 8-amino-7-oxononanoate (AON), [acyl-carrier protein], and carbon dioxide. The polypeptide is 8-amino-7-oxononanoate synthase (Geobacter sulfurreducens (strain ATCC 51573 / DSM 12127 / PCA)).